Consider the following 2123-residue polypeptide: Bromodomain adjacent to zinc finger domain protein 2B (2123 aa).

7 disordered regions span residues 1-129 (MESG…VNGT), 144-306 (TPAS…LSQQ), 357-402 (PSPD…EMGK), 473-534 (NENV…HPHP), 546-691 (RGTD…RRVA), 756-793 (RAMD…GSAE), and 937-960 (ARKK…LNKE). Low complexity predominate over residues 7-46 (LPSSPASSTTPTSSSAPSVASAVSKSSLSTGAASLSSTAS). A compositionally biased stretch (pro residues) spans 83-95 (FFPPLLGIPPLFA). Residues 100-116 (NHDSSFHSRTSGKSSRN) are compositionally biased toward polar residues. 2 stretches are compositionally biased toward low complexity: residues 147–157 (SSSMGQNQSTS) and 193–216 (ESSS…ISSS). Residues 217–243 (DSDDLEEEEEEDQSVEESEDDDSDSET) are compositionally biased toward acidic residues. A compositionally biased stretch (basic and acidic residues) spans 259–277 (SDPKTDGQKATEKAQERRT). 2 stretches are compositionally biased toward low complexity: residues 291 to 306 (PPFQ…LSQQ) and 366 to 379 (NKNT…LTSE). A compositionally biased stretch (polar residues) spans 473 to 502 (NENVSSSTPFSSPVNLSTSGRRAPGSQTPA). The segment covering 546-559 (RGTDSDVPSSKDSE) has biased composition (basic and acidic residues). The span at 560 to 587 (DSNEDEEEDDEEEDEEDDEDDESDDSQS) shows a compositional bias: acidic residues. Residues 588–597 (ESDSNSQSDS) are compositionally biased toward low complexity. Residues 598 to 615 (EGSEDDEEKDQEESDSDT) show a composition bias toward acidic residues. 2 stretches are compositionally biased toward low complexity: residues 628–637 (SSSAKSPPSS) and 671–683 (TSSS…PHSG). In terms of domain architecture, MBD spans 690–765 (VADDQELRIP…RAMDGRRGRP (76 aa)). The segment covering 756 to 778 (RAMDGRRGRPPNPDRPRAREESR) has biased composition (basic and acidic residues). Positions 1004 to 1069 (GTTFSDCLMV…LSAAVCDPGL (66 aa)) constitute a DDT domain. Disordered regions lie at residues 1183–1260 (RDAS…QTAS), 1396–1444 (PPES…KTDA), 1499–1526 (TLVT…SSVQ), and 1588–1614 (FLTS…AQPV). A compositionally biased stretch (acidic residues) spans 1214–1238 (SDYDDDDDDDSDDQADEDEEDEEDK). Residues 1239 to 1248 (DDKKGKKTDI) show a composition bias toward basic and acidic residues. Residues 1254–1281 (EGDQTASVEELEKQIEKLSKQQSQYRRK) adopt a coiled-coil conformation. Polar residues-rich tracts occupy residues 1408-1422 (NVST…QNSG) and 1430-1444 (PSAT…KTDA). Residues 1505 to 1515 (SQPPSKSPSPA) show a composition bias toward pro residues. Residues 1588 to 1600 (FLTSSVASSKSDS) are compositionally biased toward low complexity. A PHD-type zinc finger spans residues 1886–1936 (KVYCQICRKGDNEELLLLCDGCDKGCHTYCHRPKITTIPDGDWFCPACISK). A disordered region spans residues 1949–2013 (VKGKKTNDSK…AESTTSIKKP (65 aa)). A compositionally biased stretch (basic and acidic residues) spans 1984–1995 (GSKELKKRKMEE). Residues 1996 to 2010 (TTSLNLSKAESTTSI) are compositionally biased toward polar residues. Positions 2015–2119 (KDESRDLALC…KYFEKKWTDT (105 aa)) constitute a Bromo domain.

Belongs to the WAL family. In terms of assembly, component of the BRF-1 ISWI chromatin remodeling complex, at least composed of SMARCA1 and BAZ2B, which regulates the spacing of histone octamers on the DNA template to facilitate access to DNA. Within the BRF-1 ISWI chromatin remodeling complex interacts with SMARCA1; the interaction is direct. Component of the BRF-5 ISWI chromatin remodeling complex, at least composed of SMARCA5/SNF2H and BAZ2B, which regulates the spacing of histone octamers on the DNA template to facilitate access to DNA. Within the BRF-5 ISWI chromatin remodeling complex interacts with SMARCA5/SNF2H; the interaction is direct. Interacts with acetylated lysine residues on histone H1.4, H2A, H2B, H3 and H4 (in vitro). Interacts with EHMT1.

It is found in the nucleus. Regulatory subunit of the ATP-dependent BRF-1 and BRF-5 ISWI chromatin remodeling complexes, which form ordered nucleosome arrays on chromatin and facilitate access to DNA during DNA-templated processes such as DNA replication, transcription, and repair. Both complexes regulate the spacing of nucleosomes along the chromatin and have the ability to slide mononucleosomes to the center of a DNA template. The BRF-1 ISWI chromatin remodeling complex has a lower ATP hydrolysis rate than the BRF-5 ISWI chromatin remodeling complex. Chromatin reader protein, involved in positively modulating the rate of age-related behavioral deterioration. Represses the expression of mitochondrial function-related genes, perhaps by occupying their promoter regions, working in concert with histone methyltransferase EHMT1. In Mus musculus (Mouse), this protein is Bromodomain adjacent to zinc finger domain protein 2B.